The sequence spans 190 residues: Vexin (190 aa).

A disordered region spans residues 88-156; it reads AEKKASRFSR…DEATLPLTAH (69 aa). Residues 117-133 show a composition bias toward polar residues; the sequence is TDKQNAPTVPASPSSYE. Residues 136-149 are compositionally biased toward basic and acidic residues; the sequence is GCREQRPENPKDEA.

It belongs to the vexin family. In terms of tissue distribution, expressed in differentiating progenitors in the developing central nervous system (CNS).

It localises to the cell membrane. Its subcellular location is the nucleus. Its function is as follows. Required for neurogenesis in the neural plate and retina. Cooperates with cell cycle inhibitor cdknx/p27(xic1) to enhance neurogenesis and increase the levels of the neuronal determination factor neurog2/X-ngngr-1. The sequence is that of Vexin from Xenopus laevis (African clawed frog).